Here is a 467-residue protein sequence, read N- to C-terminus: Glutamate--tRNA ligase (467 aa).

A 'HIGH' region motif is present at residues 9-19 (PSPTGYLHIGG). The short motif at 237–241 (KLSKR) is the 'KMSKS' region element. Lys-240 serves as a coordination point for ATP.

This sequence belongs to the class-I aminoacyl-tRNA synthetase family. Glutamate--tRNA ligase type 1 subfamily. As to quaternary structure, monomer.

The protein resides in the cytoplasm. It catalyses the reaction tRNA(Glu) + L-glutamate + ATP = L-glutamyl-tRNA(Glu) + AMP + diphosphate. Its function is as follows. Catalyzes the attachment of glutamate to tRNA(Glu) in a two-step reaction: glutamate is first activated by ATP to form Glu-AMP and then transferred to the acceptor end of tRNA(Glu). This chain is Glutamate--tRNA ligase, found in Xanthomonas oryzae pv. oryzae (strain MAFF 311018).